The primary structure comprises 982 residues: Hunchback-like protein (982 aa).

Residues 87 to 194 (QPGEKIHPDG…SNYQVTSEPV (108 aa)) are disordered. A compositionally biased stretch (basic and acidic residues) spans 101–110 (PKEDGRKSSE). Residues 111–132 (HTNSYDVSASQSPSNDGAQSDS) show a composition bias toward polar residues. The segment covering 142 to 152 (CMTETEMDTDE) has biased composition (acidic residues). The span at 153 to 175 (KDSTIKPEDQATPKLEEGSDSKP) shows a compositional bias: basic and acidic residues. Polar residues predominate over residues 176-193 (ESTSVEGTSSNYQVTSEP). 7 consecutive C2H2-type zinc fingers follow at residues 336 to 358 (LVCP…MNTH), 361 to 384 (HQCS…RESH), 538 to 560 (FKCK…ARTH), 567 to 589 (LNCQ…YRNH), 595 to 617 (FQCK…MKSH), 623 to 647 (FRCM…KYNH), and 734 to 756 (LKCS…SMSH). Positions 377–415 (KKHMRESHTVEEQLRAGFESEPAKESASSPKNLSLSKDG) are disordered. A disordered region spans residues 811-896 (EEMDQGSDSA…PPLHSSSIVA (86 aa)). Polar residues-rich tracts occupy residues 816-831 (GSDS…QISS) and 843-862 (SLEQ…SNDS). Residues 863–875 (AMEKDGESADDAP) are compositionally biased toward basic and acidic residues. C2H2-type zinc fingers lie at residues 929–951 (FYCD…MRFH) and 957–981 (FMCS…QARH).

The protein belongs to the hunchback C2H2-type zinc-finger protein family. In terms of tissue distribution, expressed primarily in ectodermal cells during embryonic and larval development.

It localises to the nucleus. Its function is as follows. Required for the late stages of development. Plays a role in the developmental timing of postembryonic hypodermal seam cell fusion events and adult alae production. This chain is Hunchback-like protein, found in Caenorhabditis elegans.